Reading from the N-terminus, the 261-residue chain is Zinc finger protein 664 (261 aa).

9 C2H2-type zinc fingers span residues tyrosine 3–histidine 25, histidine 31–histidine 53, tyrosine 59–histidine 81, tyrosine 87–histidine 109, tyrosine 115–histidine 137, phenylalanine 143–histidine 165, tyrosine 171–histidine 193, tyrosine 199–histidine 221, and phenylalanine 227–histidine 249. A Glycyl lysine isopeptide (Lys-Gly) (interchain with G-Cter in SUMO2) cross-link involves residue lysine 257.

The protein belongs to the krueppel C2H2-type zinc-finger protein family. Expressed in the organ of Corti, stria vascularis, auditory nerve and retina. Lower levels in the tongue, cerebellum, small intestine and kidney.

It is found in the nucleus. Its function is as follows. May be involved in transcriptional regulation. In Cavia porcellus (Guinea pig), this protein is Zinc finger protein 664 (ZNF664).